The primary structure comprises 1007 residues: Mediator of RNA polymerase II transcription subunit 5 (1007 aa).

It belongs to the Mediator complex subunit 5 family. Component of the Mediator complex.

It localises to the nucleus. Functionally, component of the Mediator complex, a coactivator involved in the regulated transcription of nearly all RNA polymerase II-dependent genes. Mediator functions as a bridge to convey information from gene-specific regulatory proteins to the basal RNA polymerase II transcription machinery. Mediator is recruited to promoters by direct interactions with regulatory proteins and serves as a scaffold for the assembly of a functional preinitiation complex with RNA polymerase II and the general transcription factors. In Aspergillus fumigatus (strain ATCC MYA-4609 / CBS 101355 / FGSC A1100 / Af293) (Neosartorya fumigata), this protein is Mediator of RNA polymerase II transcription subunit 5 (nut1).